Here is a 58-residue protein sequence, read N- to C-terminus: Sodium/potassium-transporting ATPase subunit gamma (58 aa).

The helical transmembrane segment at 20–39 threads the bilayer; sequence NGGLIFAALAFIVGLVIILS.

The protein belongs to the FXYD family. Regulatory subunit of the sodium/potassium-transporting ATPase which is composed of a catalytic alpha subunit, an auxiliary non-catalytic beta subunit and an additional regulatory subunit. In terms of tissue distribution, highest levels expressed in the kidney and spleen. Restricted to the basolateral membrane in renal epithelial cells and varies in its level of expression along the nephron.

It is found in the membrane. Its function is as follows. May be involved in forming the receptor site for cardiac glycoside binding or may modulate the transport function of the sodium ATPase. The sequence is that of Sodium/potassium-transporting ATPase subunit gamma (FXYD2) from Bos taurus (Bovine).